The chain runs to 83 residues: uncharacterized protein (83 aa).

This is an uncharacterized protein from Dictyostelium discoideum (Social amoeba).